A 374-amino-acid chain; its full sequence is 5-pentadecatrienyl resorcinol O-methyltransferase (374 aa).

S-adenosyl-L-methionine contacts are provided by Asp-239, Asp-261, Met-262, and Lys-275. His-279 acts as the Proton acceptor in catalysis.

It belongs to the class I-like SAM-binding methyltransferase superfamily. Cation-independent O-methyltransferase family. COMT subfamily. In terms of assembly, homodimer. Expressed predominantly in root hairs.

The enzyme catalyses (8Z,11Z)-5-(pentadeca-8,11,14-trien-1-yl)resorcinol + S-adenosyl-L-methionine = (8Z,11Z)-5-(pentadeca- 8,11,14-trien-1-yl)resorcinol-3-methyl ether + S-adenosyl-L-homocysteine + H(+). O-methyltransferase involved in the biosynthetic pathway of the phytotoxin sorgoleone, a potent broad-spectrum inhibitor active against many agronomically important monocot and dicot weed species. Substrate specificity for alkylresorcinols. Strong preference for a five carbons alkyl side chain. This Sorghum bicolor (Sorghum) protein is 5-pentadecatrienyl resorcinol O-methyltransferase (OMT3).